The following is a 101-amino-acid chain: MIKSELVQRIAEHNPHLYQRDVENIVNAILEEIVAALARGDRVELRGFGAFSVKHRPARAGRNPRTGAHVPVDQKSVPFFKTGKEMRERLNRDHPDPGAAD.

A disordered region spans residues 57–101 (PARAGRNPRTGAHVPVDQKSVPFFKTGKEMRERLNRDHPDPGAAD). Residues 82 to 101 (TGKEMRERLNRDHPDPGAAD) show a composition bias toward basic and acidic residues.

Belongs to the bacterial histone-like protein family. In terms of assembly, heterodimer of an alpha and a beta chain.

Its function is as follows. This protein is one of the two subunits of integration host factor, a specific DNA-binding protein that functions in genetic recombination as well as in transcriptional and translational control. This is Integration host factor subunit beta from Bradyrhizobium diazoefficiens (strain JCM 10833 / BCRC 13528 / IAM 13628 / NBRC 14792 / USDA 110).